The following is a 503-amino-acid chain: Cytochrome P450 monooxygenase ecdH (503 aa).

Residues 8–24 (TTLLCGVISSTLLLLLL) traverse the membrane as a helical segment. N-linked (GlcNAc...) asparagine glycosylation is found at N64, N324, and N413. C449 contacts heme.

It belongs to the cytochrome P450 family. Heme is required as a cofactor.

The protein resides in the membrane. It functions in the pathway antifungal biosynthesis. Cytochrome P450 monooxygenase; part of the gene cluster that mediates the biosynthesis of echinocandin B, a fungal lipidated cyclic hexapeptide that acts as an antifungal agent. Linoleoyl-AMP, produced by the fatty-acyl-AMP ligase ecdI, is transferred to the initiation carrier domain (T0) of ecdA. The linoleoyl-S-phosphopantetheinyl-T0 is sequentially extended with L-ornithine, L-threonine, L-proline, L-homotyrosine, L-threonine, and 4R-methyl-L-proline to form the linear hexapeptide. Thereafter, the terminal condensation (C7) performs macrocyclization of the NRPS product and the cyclic scaffold is released from ecdA. All six of the amino acid residues are hydroxylated, including 4R,5R-dihydroxy-L-ornithine, 4R-hydroxyl-L-proline, 3S,4S-dihydroxy-L-homotyrosine, and 3S-hydroxyl-4S-methyl-L-prolin. In the pathway, all the hydroxylation reactions are proposed to occur following completion of the cyclic peptide, so the unhydroxylated precursor produced by ecdA will undergo six rounds of hydroxylation. Five hydroxylase genes (ecdG, ecdH, ecdK, htyE and htyF) are embedded within the echinocandin B (ecd) and L-homotyrosine (hty) clusters. The polypeptide is Cytochrome P450 monooxygenase ecdH (Aspergillus rugulosus (Emericella rugulosa)).